A 183-amino-acid polypeptide reads, in one-letter code: NADH-quinone oxidoreductase subunit A (183 aa).

A run of 3 helical transmembrane segments spans residues 11–31 (IIAF…VPLL), 63–83 (FYLV…LYAW), and 98–118 (MVIF…TGAL). The tract at residues 160–183 (GHIPAQSSGRMKSKTSTAPSSKQE) is disordered. Residues 164-183 (AQSSGRMKSKTSTAPSSKQE) show a composition bias toward polar residues.

It belongs to the complex I subunit 3 family. NDH-1 is composed of 14 different subunits. Subunits NuoA, H, J, K, L, M, N constitute the membrane sector of the complex.

The protein localises to the cell inner membrane. The catalysed reaction is a quinone + NADH + 5 H(+)(in) = a quinol + NAD(+) + 4 H(+)(out). NDH-1 shuttles electrons from NADH, via FMN and iron-sulfur (Fe-S) centers, to quinones in the respiratory chain. The immediate electron acceptor for the enzyme in this species is believed to be ubiquinone. Couples the redox reaction to proton translocation (for every two electrons transferred, four hydrogen ions are translocated across the cytoplasmic membrane), and thus conserves the redox energy in a proton gradient. This chain is NADH-quinone oxidoreductase subunit A, found in Acinetobacter baylyi (strain ATCC 33305 / BD413 / ADP1).